Reading from the N-terminus, the 259-residue chain is Phosphatidylserine decarboxylase proenzyme (259 aa).

Residue Ser183 is the Schiff-base intermediate with substrate; via pyruvic acid of the active site. Ser183 carries the pyruvic acid (Ser); by autocatalysis modification.

The protein belongs to the phosphatidylserine decarboxylase family. PSD-A subfamily. Heterodimer of a large membrane-associated beta subunit and a small pyruvoyl-containing alpha subunit. The cofactor is pyruvate. Is synthesized initially as an inactive proenzyme. Formation of the active enzyme involves a self-maturation process in which the active site pyruvoyl group is generated from an internal serine residue via an autocatalytic post-translational modification. Two non-identical subunits are generated from the proenzyme in this reaction, and the pyruvate is formed at the N-terminus of the alpha chain, which is derived from the carboxyl end of the proenzyme. The post-translation cleavage follows an unusual pathway, termed non-hydrolytic serinolysis, in which the side chain hydroxyl group of the serine supplies its oxygen atom to form the C-terminus of the beta chain, while the remainder of the serine residue undergoes an oxidative deamination to produce ammonia and the pyruvoyl prosthetic group on the alpha chain.

The protein resides in the cell membrane. The catalysed reaction is a 1,2-diacyl-sn-glycero-3-phospho-L-serine + H(+) = a 1,2-diacyl-sn-glycero-3-phosphoethanolamine + CO2. It participates in phospholipid metabolism; phosphatidylethanolamine biosynthesis; phosphatidylethanolamine from CDP-diacylglycerol: step 2/2. In terms of biological role, catalyzes the formation of phosphatidylethanolamine (PtdEtn) from phosphatidylserine (PtdSer). The chain is Phosphatidylserine decarboxylase proenzyme from Neisseria gonorrhoeae (strain ATCC 700825 / FA 1090).